We begin with the raw amino-acid sequence, 144 residues long: Peptide methionine sulfoxide reductase MsrB (144 aa).

Residues 5 to 128 (QEELRQRIGH…NSAALDFIPY (124 aa)) enclose the MsrB domain. C117 acts as the Nucleophile in catalysis.

It belongs to the MsrB Met sulfoxide reductase family.

It catalyses the reaction L-methionyl-[protein] + [thioredoxin]-disulfide + H2O = L-methionyl-(R)-S-oxide-[protein] + [thioredoxin]-dithiol. This chain is Peptide methionine sulfoxide reductase MsrB, found in Streptococcus agalactiae serotype Ia (strain ATCC 27591 / A909 / CDC SS700).